We begin with the raw amino-acid sequence, 264 residues long: Diphthine synthase (264 aa).

S-adenosyl-L-methionine contacts are provided by residues Leu10, Asp87, Val90, 115-116, Leu166, Ala209, and His234; that span reads SI.

Belongs to the diphthine synthase family. Homodimer.

The catalysed reaction is 2-[(3S)-amino-3-carboxypropyl]-L-histidyl-[translation elongation factor 2] + 3 S-adenosyl-L-methionine = diphthine-[translation elongation factor 2] + 3 S-adenosyl-L-homocysteine + 3 H(+). The protein operates within protein modification; peptidyl-diphthamide biosynthesis. S-adenosyl-L-methionine-dependent methyltransferase that catalyzes the trimethylation of the amino group of the modified target histidine residue in translation elongation factor 2 (EF-2), to form an intermediate called diphthine. The three successive methylation reactions represent the second step of diphthamide biosynthesis. This chain is Diphthine synthase, found in Thermococcus gammatolerans (strain DSM 15229 / JCM 11827 / EJ3).